Here is a 284-residue protein sequence, read N- to C-terminus: Orotidine 5'-phosphate decarboxylase (284 aa).

Substrate contacts are provided by residues D42, K64–H66, D96–T105, Y237, and R255. K98 acts as the Proton donor in catalysis.

It belongs to the OMP decarboxylase family.

It carries out the reaction orotidine 5'-phosphate + H(+) = UMP + CO2. It functions in the pathway pyrimidine metabolism; UMP biosynthesis via de novo pathway; UMP from orotate: step 2/2. In Magnusiomyces magnusii (Yeast), this protein is Orotidine 5'-phosphate decarboxylase (URA3).